The primary structure comprises 127 residues: Large ribosomal subunit protein bL17 (127 aa).

Belongs to the bacterial ribosomal protein bL17 family. In terms of assembly, part of the 50S ribosomal subunit. Contacts protein L32.

The protein is Large ribosomal subunit protein bL17 of Stenotrophomonas maltophilia (strain R551-3).